Consider the following 527-residue polypeptide: Coatomer subunit delta (527 aa).

The segment covering 166-175 has biased composition (basic and acidic residues); that stretch reads IDKSKIEKNK. Disordered stretches follow at residues 166 to 187 and 217 to 250; these read IDKS…SMGS and SDVD…KSGK. 2 stretches are compositionally biased toward low complexity: residues 177–187 and 239–250; these read GGFSSMGSMGS and KSSGMKLGKSGK. Residues 282-527 enclose the MHD domain; it reads TDPFTLTVEE…QLIAQNYQVI (246 aa).

The protein belongs to the adaptor complexes medium subunit family. Delta-COP subfamily. Oligomeric complex that consists of at least the alpha, beta, beta', gamma, delta, epsilon and zeta subunits.

It is found in the cytoplasm. Its subcellular location is the golgi apparatus membrane. The protein resides in the cytoplasmic vesicle. It localises to the COPI-coated vesicle membrane. Its function is as follows. The coatomer is a cytosolic protein complex that binds to dilysine motifs and reversibly associates with Golgi non-clathrin-coated vesicles, which further mediate biosynthetic protein transport from the ER, via the Golgi up to the trans Golgi network. Coatomer complex is required for budding from Golgi membranes, and is essential for the retrograde Golgi-to-ER transport of dilysine-tagged proteins. The protein is Coatomer subunit delta of Arabidopsis thaliana (Mouse-ear cress).